A 73-amino-acid chain; its full sequence is IGMAVECKDGYLVGADGCKYGCFTRPGHFCASECSLLKGKDGYCYAWLACYCYNLPDSVPVWDSATNRCGKGK.

Residues 1 to 7 (IGMAVEC) form the signal peptide. In terms of domain architecture, LCN-type CS-alpha/beta spans 8–70 (KDGYLVGADG…VWDSATNRCG (63 aa)). Disulfide bonds link Cys-18–Cys-69, Cys-22–Cys-44, Cys-30–Cys-50, and Cys-34–Cys-52. The residue at position 71 (Lys-71) is a Lysine amide.

Belongs to the long (4 C-C) scorpion toxin superfamily. Sodium channel inhibitor family. Beta subfamily. As to expression, expressed by the venom gland.

It localises to the secreted. Functionally, beta toxins bind voltage-independently at site-4 of sodium channels (Nav) and shift the voltage of activation toward more negative potentials thereby affecting sodium channel activation and promoting spontaneous and repetitive firing. The sequence is that of Toxin Td7 from Tityus discrepans (Venezuelan scorpion).